Consider the following 471-residue polypeptide: Lincomycin resistance protein LmrB (471 aa).

12 helical membrane passes run 13-35 (PIPI…TALN), 55-77 (LTTG…LQWF), 84-106 (FTAV…FAML), 111-133 (VVQA…LIFP), 140-162 (AMGM…SGLI), 167-189 (TWNW…GMKF), 201-223 (IDIL…FSSA), 227-249 (GWGS…LFVW), 269-291 (FTLG…ILLP), 329-351 (AYGP…FFLT), 358-380 (SALT…MMPA), and 445-467 (GIQN…SLFI).

Belongs to the major facilitator superfamily. EmrB family.

The protein localises to the cell membrane. Proton-dependent transporter. May mediate the efflux of lincomycin. The polypeptide is Lincomycin resistance protein LmrB (lmrB) (Listeria monocytogenes serovar 1/2a (strain ATCC BAA-679 / EGD-e)).